A 2656-amino-acid chain; its full sequence is MAESFQQLGVGSKSNERSFFSKFFGTDDSQKDFGPLPEIEYSDEQRFNPYPAIYEKKNNNNNNNNNNNNNNNNNNNNNNNNNNNNNNNSNGNGNRSNSSLNNSNNNNQVRRTHSPSVSNKSDESNTTNTNTNITTNTNITTNTNTNTNTNSTNNDTSSNVTQQQLLTNLGQSKIISALKTKFQRPLPPVDDKKFWMPDHSSAVCYECSEEFTTFKRRHHCRLCGQIFCWKCSQKTLTDGKGERVRVCNFCYRRYMAPDDLDMEGYHYDPITGTVISLITNNDDGTNLNNGNGLIKLDGSTHNMNVSLGNSGDNSSFVQSPNNNFSQSPTFSQQQQQQQQQQQQQQQQQQQQQQQQTTGVMSGLNPFSNSTLLFGRNNNNNNQQQQQPIIEEDKQYYGDINTSYNNSYFNNNGFNNFNNEHYNNTNFNATSLNLNSQLHSNLLANTNGELFYDNSQHSISNYGNLDHHQQQQQSNSHGSLSATPSNTPSGLISPIVGAPSILDPNKMIFYSDQEGNYDNLDDYETSSSDGSDNDNEDNHLKSSHSSANDLGTSNTVSTGESNSESKLSSSSNDISIHHHHYHHHHHHSHGNLLKSNSLTPLNLNNNNIIINNNNINNNNNNDNGNDDNNNNNNDNNNNTTIEVDPRHSMPSKTSNTSFSMASLPSIFKLPTIGRNNNNNNNSGSGNSQYLSANSNASNSISPPNSARGSSSNPNSMTPTPTLSSSFSNLPNAETSPPSLVKAKQQQQQQQQQQQQPQPVLQPTIHHPLKTSLPMFSTQSPPPPTNQLAQSTSMAPPPSIFSPLGKLQALSHPSSSSNNQQQQQPQIVKPIIIAPNSLFFSDPSIVSLKSHPKTTNKTKFLEKYPLPKKYYESTENIIDTFGFKRTPSTEGNLLSQMLATSKQKEFDEKERLKISNNPQMSVYIQHINNLVSEQLEKNNIDLSWRSIIIDLTKKATDNVKIFVRKGDKMSTNEYIKIKKIPGGNKSECNYVDGVVMTKILTHKKMKDKFINPKILLLSCSVEFQRVENKFLYFDQLLQQEKEYLRILVSKIAERKPDLVLVEKTVSRHAQDFLLDAGISLALNVKPKLLERLGRCLGGEVLPTLDIIYNNNSNNNNSNSIQLQQQQNSNSPASLQNSTTTTNNNNNNNNNSTTLGSCGQFKVITYSEIGLKEKEILGKKTLMYFEKCPVELGATIIIRGEDLAVLKIIKKILKLSIFSMHNAYLELKYLNDQSSTSNLLFVNNNGQNLSCSPQIKFPLPKTYPTIPWKYQFTSQHIPVKKALLTSFYKPHSDFGQQQSVIQWTSDDEVLGIGTSDAFKHCDMKFPIENESIYDHQSIVFSHSIFCNSNQCIPFEIHAIDYYTDNDLTLGEFLSKFCFSLHICNIKECNRPLIEHERTFMNSTTRINICVQKTQTIQDRPTNSSPAQQRNQPVQRAGINVINLCKICNKFSPESPMSEEAWEMSFGKFLELCFFGFLPIKTGISPECSHNNAKDHISYFYYQDLAAIFSYEPLPSLELSLPPKNLKATYTEKQRQSVRAKELEIMNQCANQVYSAIHERLYEIGQENQGDRVQELIPSLVQEKQLICSKIESLLLLPESAHKSNDQIINLTKLLYANFMTWNSQLTGLIDSTSYQRSKRNVQQQQQQQQHQQSQQPQPQILIGGDVYSDSHLHTDSVKKINSKQHSHNTILLQSIQSNQEQQLEQQEEFEINVNNNNNNNNNNNNNNNNNNNNNNNNNNNNNNNNNNNNTIDNKSENENENKNENKNENENENENKNENKNENENENKKENENQLEIKNENNDSGEEITNNNNNNNNNNNNNNNNNNNNNNNIDNNNNKDENISSTPLLSPSSVLGVSNSGINQAFLNAPNNTYNSVEQDLTLPLNHQSLNFAVGGLVSPGSSSGGLPVGSVPNSSSMPSIHNGGSGNIPSNLVGSASGLSTNYSPNALKDPKKLKIIDTIAGIVSSISQTRILGPTMPYLLLESTDNVALFENEPSTTIAYTLSSSDFKIALNSLLDEEWKRISEIEKQYELQQQQQQDSQDLESSSQQQQQQQQQQQEQQEQPSLPTPSHPLSQSMNFSPSSLLKISSSSLPKDNNNSSENKPNSETNDIVRSRGSVKLSGSPISISPLSNAFEKRKSTSLSSSANNSPISSILEKEKKLKQQSPSLSNSLSGQTIINNNQQQQQQQQPSPIIIDEKDDRNTEKSSIIETDSIIEDLNINQDESNITNEDGGKIGDYESELLYDHHQQGDSENNNNNNNNNNNNNNNNNNNNNNNNNNNTNNNNEQQINNSDTEGDSDSIKSSNSNIYSEKNIKLSKLMVSTQRKEIRSRFKFEKNGYELNIFCSSYYPVQFHALREYMCGDQEFIQSLTRSKIWNAKGGKSGSSWNKTLDDRFILKQVSRIELESFLDFAPLYFEYICKSFLNQIPTALCKILGVFTVRWKDSNGKALKKDLIVMENLFHSKCISKTYDLKGSLRGRLVKNESEVLLDENLLQASFASPICLGEYDKTRVALAVWNDTAFLSSLNVMDYSLLSGIDNQSNQLVVGIIDYMRKFTWDKALEMKVKQSGIMGGGGKVPTVISPKQYKLRFRDAMWLYFTLSPDKFTKVKHLMPYEKKKNNNNNYNYNNFNNNNFNNNNNISNNGNGNINQRQVQQINK.

Residues 24–159 (FGTDDSQKDF…NSTNNDTSSN (136 aa)) form a disordered region. Composition is skewed to low complexity over residues 59–107 (NNNN…NNNN) and 124–159 (SNTT…TSSN). The FYVE-type zinc-finger motif lies at 198–255 (DHSSAVCYECSEEFTTFKRRHHCRLCGQIFCWKCSQKTLTDGKGERVRVCNFCYRRYM). Zn(2+) is bound by residues C204, C207, C220, C223, C228, C231, C247, and C250. The segment covering 304–331 (NVSLGNSGDNSSFVQSPNNNFSQSPTFS) has biased composition (polar residues). Disordered regions lie at residues 304–383 (NVSL…NNQQ), 465–495 (DHHQ…SPIV), 517–570 (DNLD…SSSS), 618–657 (NNND…NTSF), 670–823 (TIGR…QQQP), 1115–1150 (SNSI…NNST), 1633–1659 (RSKR…QILI), 1710–1844 (VNNN…SSTP), 2031–2127 (QQQQ…SISP), 2179–2208 (NQQQ…SIIE), 2246–2304 (QQGD…SSNS), and 2617–2656 (NNNN…QINK). Low complexity predominate over residues 332–355 (QQQQQQQQQQQQQQQQQQQQQQQQ). Composition is skewed to polar residues over residues 356–371 (TTGV…NSTL), 473–489 (SNSH…TPSG), and 542–557 (SHSS…TVST). Low complexity-rich tracts occupy residues 558-570 (GESN…SSSS), 618-637 (NNND…NNNN), 674-730 (NNNN…NLPN), 743-757 (QQQQ…QPQP), and 811-823 (PSSS…QQQP). 2 stretches are compositionally biased toward low complexity: residues 1639–1656 (QQQQ…PQPQ) and 1710–1746 (VNNN…NNNN). Coiled-coil stretches lie at residues 1741 to 1823 (NNNN…NNNN) and 2019 to 2061 (KRIS…QQEQ). The span at 1750–1798 (NKSENENENKNENKNENENENENKNENKNENENENKKENENQLEIKNEN) shows a compositional bias: basic and acidic residues. Composition is skewed to low complexity over residues 1807–1833 (NNNN…IDNN), 2031–2061 (QQQQ…QQEQ), 2078–2107 (SPSS…SETN), and 2118–2127 (LSGSPISISP). Basic and acidic residues predominate over residues 2193–2202 (IDEKDDRNTE). 2 stretches are compositionally biased toward low complexity: residues 2252-2283 (NNNN…NNNN) and 2618-2647 (NNNN…GNIN). A PIPK domain is found at 2275–2596 (NNNNTNNNNE…RFRDAMWLYF (322 aa)).

Its subcellular location is the endosome membrane. It localises to the early endosome membrane. The protein localises to the cytoplasmic vesicle. It is found in the phagosome membrane. The protein resides in the late endosome membrane. The enzyme catalyses a 1,2-diacyl-sn-glycero-3-phospho-(1D-myo-inositol-3-phosphate) + ATP = a 1,2-diacyl-sn-glycero-3-phospho-(1D-myo-inositol-3,5-bisphosphate) + ADP + H(+). The catalysed reaction is a 1,2-diacyl-sn-glycero-3-phospho-(1D-myo-inositol) + ATP = a 1,2-diacyl-sn-glycero-3-phospho-(1D-myo-inositol-5-phosphate) + ADP + H(+). It carries out the reaction L-seryl-[protein] + ATP = O-phospho-L-seryl-[protein] + ADP + H(+). Dual specificity kinase part of the PI(3,5)P2 regulatory complex which regulates both the synthesis and turnover of phosphatidylinositol 3,5-bisphosphate (PtdIns(3,5)P2). Catalyzes the phosphorylation of phosphatidylinositol 3-phosphate on the fifth hydroxyl of the myo-inositol ring, to form phosphatidylinositol 3,5-bisphosphate. This chain is 1-phosphatidylinositol 3-phosphate 5-kinase (pip5k3), found in Dictyostelium discoideum (Social amoeba).